The sequence spans 327 residues: tRNA pseudouridine synthase B (327 aa).

D69 serves as the catalytic Nucleophile. The substrate site is built by Y97, Y201, and L222.

This sequence belongs to the pseudouridine synthase TruB family. Type 1 subfamily.

The enzyme catalyses uridine(55) in tRNA = pseudouridine(55) in tRNA. Its function is as follows. Responsible for synthesis of pseudouridine from uracil-55 in the psi GC loop of transfer RNAs. The protein is tRNA pseudouridine synthase B of Wigglesworthia glossinidia brevipalpis.